A 341-amino-acid polypeptide reads, in one-letter code: Type II restriction enzyme BgcI specificity subunit S.BcgI (341 aa).

This sequence belongs to the type-I restriction system S methylase family. As to quaternary structure, heterotrimer of two A and one B subunit. Both subunits are necessary for DNA-binding, which is sequence non-specific. Mg(2+) is required as a cofactor.

It carries out the reaction Endonucleolytic cleavage of DNA to give specific double-stranded fragments with terminal 5'-phosphates.. DNA restriction requires S-adenosyl-L-methionine and Mg(2+), and is inhibited by S-adenosyl-homocysteine. SAM may be a cofactor for DNA restriction. The specificity subunit. A B, G, H and S subtype restriction enzyme that recognizes the double-stranded sequence 5'-CGAN(6)TGC-3' and cleaves bilaterally and symmetrically 10 base pairs upstream and 12 base pairs downstream of the sequence to release a 34-base pair fragment. Methylation of the recognition sequence occurs on the adenine in either one or both strands; seems to methylate restricted DNA. This subunit degrades DNA in a non-specific manner. The polypeptide is Type II restriction enzyme BgcI specificity subunit S.BcgI (Heyndrickxia coagulans (Weizmannia coagulans)).